A 775-amino-acid polypeptide reads, in one-letter code: Subtilisin-like protease SBT1.5 (775 aa).

A signal peptide spans 1 to 19; the sequence is MAFFFYFFFLLTLSSPSSS. Residues 20–103 constitute a propeptide, activation peptide; the sequence is ASSSNSLTYI…VIPEQVRHLH (84 aa). Residues 27–103 form the Inhibitor I9 domain; the sequence is TYIVHVDHEA…VIPEQVRHLH (77 aa). The region spanning 107 to 617 is the Peptidase S8 domain; it reads SPEFLGLRST…SGHVHPTKAM (511 aa). Asp137 functions as the Charge relay system in the catalytic mechanism. Residue Asn196 is glycosylated (N-linked (GlcNAc...) asparagine). His210 acts as the Charge relay system in catalysis. Residues 367–459 form the PA domain; it reads MYPLVYGGSL…VGASGGDEIR (93 aa). Ser549 functions as the Charge relay system in the catalytic mechanism. N-linked (GlcNAc...) asparagine glycans are attached at residues Asn599, Asn638, and Asn762.

The protein belongs to the peptidase S8 family.

It is found in the secreted. The protein is Subtilisin-like protease SBT1.5 of Arabidopsis thaliana (Mouse-ear cress).